The chain runs to 201 residues: Histidinol dehydrogenase (201 aa).

It belongs to the histidinol dehydrogenase family. In terms of assembly, homodimer. Zn(2+) serves as cofactor.

The enzyme catalyses L-histidinol + 2 NAD(+) + H2O = L-histidine + 2 NADH + 3 H(+). It participates in amino-acid biosynthesis; L-histidine biosynthesis; L-histidine from 5-phospho-alpha-D-ribose 1-diphosphate: step 9/9. In terms of biological role, catalyzes the sequential NAD-dependent oxidations of L-histidinol to L-histidinaldehyde and then to L-histidine. This Buchnera aphidicola subsp. Diuraphis noxia protein is Histidinol dehydrogenase (hisD).